Consider the following 227-residue polypeptide: Ribose-5-phosphate isomerase A (227 aa).

Substrate is bound by residues 26–29 (TGST), 82–85 (DGAD), and 95–98 (KGGG). The active-site Proton acceptor is the glutamate 104. Lysine 122 serves as a coordination point for substrate.

Belongs to the ribose 5-phosphate isomerase family. Homodimer.

It catalyses the reaction aldehydo-D-ribose 5-phosphate = D-ribulose 5-phosphate. The protein operates within carbohydrate degradation; pentose phosphate pathway; D-ribose 5-phosphate from D-ribulose 5-phosphate (non-oxidative stage): step 1/1. Catalyzes the reversible conversion of ribose-5-phosphate to ribulose 5-phosphate. This is Ribose-5-phosphate isomerase A from Streptococcus pyogenes serotype M1.